Here is a 177-residue protein sequence, read N- to C-terminus: Late embryogenesis abundant protein 1 (177 aa).

The tract at residues 1-177 (MASHDQSYKA…DKDHFPTNRH (177 aa)) is disordered. Positions 28–39 (IEDKAQAAKEKA) are enriched in basic and acidic residues. Positions 40-89 (QQAAQTAKDKTSQTAQAAKEKTQQTAQAAKEKTQQTAQAAKDETQQTAQA) are enriched in low complexity. A run of 4 repeats spans residues 53-63 (TAQAAKEKTQQ), 64-74 (TAQAAKEKTQQ), 75-85 (TAQAAKDETQQ), and 86-96 (TAQAAKDKTQQ). The 4 X 11 AA approximate tandem repeats of T-A-Q-A-A-K-E-K-T-Q-Q stretch occupies residues 53-96 (TAQAAKEKTQQTAQAAKEKTQQTAQAAKDETQQTAQAAKDKTQQ). Basic and acidic residues predominate over residues 90–117 (AKDKTQQTTEATKEKAQDTTGRAREKGS). Polar residues predominate over residues 119 to 142 (MGQSTKETAQSGKDNSAGFLQQTG). Basic and acidic residues predominate over residues 164 to 177 (NDDKDKDHFPTNRH).

This sequence belongs to the LEA type 4 family. In terms of tissue distribution, highest expression is found in seeds. No expression detected in adult tissues.

This is Late embryogenesis abundant protein 1 from Cicer arietinum (Chickpea).